The primary structure comprises 643 residues: 1-deoxy-D-xylulose-5-phosphate synthase (643 aa).

Residues His78 and 119–121 each bind thiamine diphosphate; that span reads AHS. Asp150 lines the Mg(2+) pocket. Thiamine diphosphate-binding positions include 151 to 152, Asn179, Tyr288, and Glu370; that span reads GS. Asn179 serves as a coordination point for Mg(2+).

The protein belongs to the transketolase family. DXPS subfamily. In terms of assembly, homodimer. The cofactor is Mg(2+). Requires thiamine diphosphate as cofactor.

The enzyme catalyses D-glyceraldehyde 3-phosphate + pyruvate + H(+) = 1-deoxy-D-xylulose 5-phosphate + CO2. Its pathway is metabolic intermediate biosynthesis; 1-deoxy-D-xylulose 5-phosphate biosynthesis; 1-deoxy-D-xylulose 5-phosphate from D-glyceraldehyde 3-phosphate and pyruvate: step 1/1. Catalyzes the acyloin condensation reaction between C atoms 2 and 3 of pyruvate and glyceraldehyde 3-phosphate to yield 1-deoxy-D-xylulose-5-phosphate (DXP). This chain is 1-deoxy-D-xylulose-5-phosphate synthase, found in Brucella abortus (strain 2308).